We begin with the raw amino-acid sequence, 481 residues long: Deoxyribodipyrimidine photo-lyase (481 aa).

In terms of domain architecture, Photolyase/cryptochrome alpha/beta spans 1–136; it reads MQLFWHRRDL…AHAQFHDAVH (136 aa). An FAD-binding site is contributed by Tyr228. Arg232 serves as a coordination point for DNA. An FAD-binding site is contributed by 240–244; that stretch reads TSRLS. 2 interaction with DNA regions span residues 283–290 and 349–350; these read QLAWREFY and NR. 380 to 382 is a binding site for FAD; the sequence is DHD. Residue Gln412 coordinates DNA.

It belongs to the DNA photolyase class-1 family. In terms of assembly, monomer. Requires FAD as cofactor. Coenzyme F420-(gamma-Glu)n is required as a cofactor.

The catalysed reaction is cyclobutadipyrimidine (in DNA) = 2 pyrimidine residues (in DNA).. Involved in repair of UV radiation-induced DNA damage. Catalyzes the light-dependent monomerization (300-600 nm) of cyclobutyl pyrimidine dimers (in cis-syn configuration), which are formed between adjacent bases on the same DNA strand upon exposure to ultraviolet radiation. The chain is Deoxyribodipyrimidine photo-lyase (phr) from Halobacterium salinarum (strain ATCC 700922 / JCM 11081 / NRC-1) (Halobacterium halobium).